A 482-amino-acid polypeptide reads, in one-letter code: Cysteine--tRNA ligase (482 aa).

Cysteine 29 provides a ligand contact to Zn(2+). Residues 31–41 carry the 'HIGH' region motif; sequence PTVYDFAHIGN. The Zn(2+) site is built by cysteine 224, histidine 249, and glutamate 253. The 'KMSKS' region motif lies at 282–286; sequence KMSKS. Lysine 285 is an ATP binding site.

The protein belongs to the class-I aminoacyl-tRNA synthetase family. Monomer. Zn(2+) serves as cofactor.

Its subcellular location is the cytoplasm. The enzyme catalyses tRNA(Cys) + L-cysteine + ATP = L-cysteinyl-tRNA(Cys) + AMP + diphosphate. The sequence is that of Cysteine--tRNA ligase from Nitrobacter hamburgensis (strain DSM 10229 / NCIMB 13809 / X14).